Reading from the N-terminus, the 129-residue chain is Small ribosomal subunit protein uS11 (129 aa).

It belongs to the universal ribosomal protein uS11 family. In terms of assembly, part of the 30S ribosomal subunit. Interacts with proteins S7 and S18. Binds to IF-3.

Functionally, located on the platform of the 30S subunit, it bridges several disparate RNA helices of the 16S rRNA. Forms part of the Shine-Dalgarno cleft in the 70S ribosome. This is Small ribosomal subunit protein uS11 from Paracoccus denitrificans (strain Pd 1222).